Reading from the N-terminus, the 180-residue chain is Adenine phosphoribosyltransferase (180 aa).

Belongs to the purine/pyrimidine phosphoribosyltransferase family. In terms of assembly, homodimer.

Its subcellular location is the cytoplasm. It catalyses the reaction AMP + diphosphate = 5-phospho-alpha-D-ribose 1-diphosphate + adenine. It participates in purine metabolism; AMP biosynthesis via salvage pathway; AMP from adenine: step 1/1. In terms of biological role, catalyzes a salvage reaction resulting in the formation of AMP, that is energically less costly than de novo synthesis. This chain is Adenine phosphoribosyltransferase, found in Mycobacterium avium (strain 104).